We begin with the raw amino-acid sequence, 206 residues long: Small ribosomal subunit protein uS4 (206 aa).

The 61-residue stretch at 96–156 (GRLDNVVYRM…EKSKKQARIK (61 aa)) folds into the S4 RNA-binding domain.

The protein belongs to the universal ribosomal protein uS4 family. In terms of assembly, part of the 30S ribosomal subunit. Contacts protein S5. The interaction surface between S4 and S5 is involved in control of translational fidelity.

Functionally, one of the primary rRNA binding proteins, it binds directly to 16S rRNA where it nucleates assembly of the body of the 30S subunit. In terms of biological role, with S5 and S12 plays an important role in translational accuracy. The polypeptide is Small ribosomal subunit protein uS4 (Pasteurella multocida (strain Pm70)).